The chain runs to 331 residues: tRNA uridine(34) hydroxylase (331 aa).

Positions 123 to 217 (TDPEVLLIDT…YLEDVPQEES (95 aa)) constitute a Rhodanese domain. The Cysteine persulfide intermediate role is filled by Cys177. Residues 293 to 331 (KSRGEEHIGSEAAKAIKKRQAEKKLKRKNYHQHLTQGAE) are disordered. Over residues 307-323 (AIKKRQAEKKLKRKNYH) the composition is skewed to basic residues.

The protein belongs to the TrhO family.

The catalysed reaction is uridine(34) in tRNA + AH2 + O2 = 5-hydroxyuridine(34) in tRNA + A + H2O. Its function is as follows. Catalyzes oxygen-dependent 5-hydroxyuridine (ho5U) modification at position 34 in tRNAs. The polypeptide is tRNA uridine(34) hydroxylase (Hahella chejuensis (strain KCTC 2396)).